Reading from the N-terminus, the 468-residue chain is ATP synthase subunit beta 2 (468 aa).

155-162 is an ATP binding site; sequence GGAGVGKT.

It belongs to the ATPase alpha/beta chains family. F-type ATPases have 2 components, CF(1) - the catalytic core - and CF(0) - the membrane proton channel. CF(1) has five subunits: alpha(3), beta(3), gamma(1), delta(1), epsilon(1). CF(0) has four main subunits: a(1), b(1), b'(1) and c(9-12).

The protein localises to the cell inner membrane. It catalyses the reaction ATP + H2O + 4 H(+)(in) = ADP + phosphate + 5 H(+)(out). Produces ATP from ADP in the presence of a proton gradient across the membrane. The catalytic sites are hosted primarily by the beta subunits. This Chlorobium luteolum (strain DSM 273 / BCRC 81028 / 2530) (Pelodictyon luteolum) protein is ATP synthase subunit beta 2.